We begin with the raw amino-acid sequence, 226 residues long: 2-C-methyl-D-erythritol 4-phosphate cytidylyltransferase (226 aa).

Belongs to the IspD/TarI cytidylyltransferase family. IspD subfamily.

It catalyses the reaction 2-C-methyl-D-erythritol 4-phosphate + CTP + H(+) = 4-CDP-2-C-methyl-D-erythritol + diphosphate. It participates in isoprenoid biosynthesis; isopentenyl diphosphate biosynthesis via DXP pathway; isopentenyl diphosphate from 1-deoxy-D-xylulose 5-phosphate: step 2/6. Functionally, catalyzes the formation of 4-diphosphocytidyl-2-C-methyl-D-erythritol from CTP and 2-C-methyl-D-erythritol 4-phosphate (MEP). The chain is 2-C-methyl-D-erythritol 4-phosphate cytidylyltransferase from Prochlorococcus marinus (strain SARG / CCMP1375 / SS120).